Consider the following 144-residue polypeptide: MKLNDLSPAPGSRREKHRPGRGIGSGLGKTGGRGHKGQSSRSGGTIAPGFEGGQQPLHRRLPKFGFVSLKAMDRAEVRLSELAKVEGDIVTVQSLKDANVINQNVQRVKIMLSGEVTRAVTIKGIAATKGARAAIEAAGGKFEE.

The segment at 1-57 is disordered; it reads MKLNDLSPAPGSRREKHRPGRGIGSGLGKTGGRGHKGQSSRSGGTIAPGFEGGQQPL. Residues 21 to 31 are compositionally biased toward gly residues; the sequence is RGIGSGLGKTG.

The protein belongs to the universal ribosomal protein uL15 family. As to quaternary structure, part of the 50S ribosomal subunit.

Its function is as follows. Binds to the 23S rRNA. The sequence is that of Large ribosomal subunit protein uL15 from Pseudomonas savastanoi pv. phaseolicola (strain 1448A / Race 6) (Pseudomonas syringae pv. phaseolicola (strain 1448A / Race 6)).